Consider the following 240-residue polypeptide: Small ribosomal subunit protein uS2c (240 aa).

It belongs to the universal ribosomal protein uS2 family.

The protein resides in the plastid. The protein localises to the chloroplast. In Euglena gracilis, this protein is Small ribosomal subunit protein uS2c (rps2).